Here is a 137-residue protein sequence, read N- to C-terminus: Peptide methionine sulfoxide reductase MsrB (137 aa).

In terms of domain architecture, MsrB spans 7 to 129 (PGELKNGLSE…NSASLSFTDE (123 aa)). Zn(2+) is bound by residues C46, C49, C95, and C98. C118 serves as the catalytic Nucleophile.

It belongs to the MsrB Met sulfoxide reductase family. The cofactor is Zn(2+).

The catalysed reaction is L-methionyl-[protein] + [thioredoxin]-disulfide + H2O = L-methionyl-(R)-S-oxide-[protein] + [thioredoxin]-dithiol. This chain is Peptide methionine sulfoxide reductase MsrB, found in Klebsiella pneumoniae (strain 342).